An 81-amino-acid chain; its full sequence is Large ribosomal subunit protein bL31B (81 aa).

Belongs to the bacterial ribosomal protein bL31 family. Type B subfamily. In terms of assembly, part of the 50S ribosomal subunit.

The polypeptide is Large ribosomal subunit protein bL31B (Bacillus anthracis (strain A0248)).